Reading from the N-terminus, the 439-residue chain is Ribosomal protein uS12 methylthiotransferase RimO (439 aa).

Residues 3-115 (KKLHLISLGC…IDQMVRERQG (113 aa)) enclose the MTTase N-terminal domain. The [4Fe-4S] cluster site is built by C12, C46, C78, C147, C151, and C154. The 230-residue stretch at 133–362 (TGSSVHAYVK…DKIIQKQHRA (230 aa)) folds into the Radical SAM core domain.

It belongs to the methylthiotransferase family. RimO subfamily. [4Fe-4S] cluster serves as cofactor.

The protein localises to the cytoplasm. The enzyme catalyses L-aspartate(89)-[ribosomal protein uS12]-hydrogen + (sulfur carrier)-SH + AH2 + 2 S-adenosyl-L-methionine = 3-methylsulfanyl-L-aspartate(89)-[ribosomal protein uS12]-hydrogen + (sulfur carrier)-H + 5'-deoxyadenosine + L-methionine + A + S-adenosyl-L-homocysteine + 2 H(+). Its function is as follows. Catalyzes the methylthiolation of an aspartic acid residue of ribosomal protein uS12. The polypeptide is Ribosomal protein uS12 methylthiotransferase RimO (Wolinella succinogenes (strain ATCC 29543 / DSM 1740 / CCUG 13145 / JCM 31913 / LMG 7466 / NCTC 11488 / FDC 602W) (Vibrio succinogenes)).